Consider the following 246-residue polypeptide: Adenosylcobinamide-GDP ribazoletransferase (246 aa).

A run of 7 helical transmembrane segments spans residues 30-50 (VNWYPAVGLVIGLLLWGVHQA), 51-71 (GLVLFSPWIAAILTLIAWVYV), 105-125 (VGAMGVLAAIMLLLIKAGAVA), 131-151 (GWGSFLIVAPVAARTHVLLSI), 167-189 (ISSGLSVSSIIVSYIIVFAAGWY), 193-210 (LQVMTAIFLSLLFALWFS), and 226-246 (GAVIESSEAVVLLVLVGSWWL).

Belongs to the CobS family. The cofactor is Mg(2+).

It localises to the cell membrane. The catalysed reaction is alpha-ribazole + adenosylcob(III)inamide-GDP = adenosylcob(III)alamin + GMP + H(+). The enzyme catalyses alpha-ribazole 5'-phosphate + adenosylcob(III)inamide-GDP = adenosylcob(III)alamin 5'-phosphate + GMP + H(+). Its pathway is cofactor biosynthesis; adenosylcobalamin biosynthesis; adenosylcobalamin from cob(II)yrinate a,c-diamide: step 7/7. In terms of biological role, joins adenosylcobinamide-GDP and alpha-ribazole to generate adenosylcobalamin (Ado-cobalamin). Also synthesizes adenosylcobalamin 5'-phosphate from adenosylcobinamide-GDP and alpha-ribazole 5'-phosphate. This Brevibacillus brevis (strain 47 / JCM 6285 / NBRC 100599) protein is Adenosylcobinamide-GDP ribazoletransferase.